An 875-amino-acid polypeptide reads, in one-letter code: MATERYNPRASEPKWQKAWAEKKLFEARNDDPKPKYYVLEMFPYPSGRIHIGHTRNYTMGDVVARYKRAKGFNVLHPMGWDAFGMPAENAAMQNKVHPKEWTYQNIATMREQLKVMGLSLDWAREFATCDVDYYHRQQMLFLDFVEKGLVTRKSSKVNWDPEDMTVLANEQVIDGRGWRSGALVEQRELTQWFFKITDFAQDLLDSLEGLDEWPEKVKLMQQNWIGRSEGLLIRWPLASDVAGEHELEVYTTRPDTIFGASFMAVAADHPLAKKAAETNPALAKFIDEVRHMGTSVAALETAEKKGFDTGIRVVHPFDDSWTLPVYVANFVLMEYGTGAIFGCPSGDQRDLDFANKYGLPVIPVVMPEGGDAKSFQITEEAYVDDGVMINSRFLDGMKPDRAFDEVAKLLEQKTIGNRPMAERKVNFRLRDWGISRQRYWGCPIPMIHCEDCGVVPVPKADLPVKLPDDVDFDRPGNPLDRHPTWRHVKCPQCGRDARRETDTMDTFVDSSWYFARFTAPWAYEPTDPRAANEWLPVDQYIGGIEHAILHLLYSRFFTRAMRATGHVDLAEPFKGLFTQGMVVHETYRVGGASNNGRWLSPAEVRIEDAEGKRRAIEIATGEEAAIGSLEKMSKSKKNTVSPEDITDGYGADTARWLMLSDSPPEGDVEWTDDGAAGAHRFMQRIWRLVSTAAETLAGVKPAAADSGEAGAVRKATHKILKAVGEDIEKLGFNRAIARIYELANVLTTPLNQVAEGKADPALQGACREAVEILVHLIAPVMPHLAEECWETLGGTDLVAERPWPAFDPALVVDNEVTYPVQVNGKKRGDLTIARDADQGAVEKAVLALDFVQKALEGKAPRKVIIVPQRIVNVVA.

Residues 43–53 (PYPSGRIHIGH) carry the 'HIGH' region motif. Residues 631–635 (KMSKS) carry the 'KMSKS' region motif. Residue Lys634 coordinates ATP.

The protein belongs to the class-I aminoacyl-tRNA synthetase family.

It localises to the cytoplasm. The catalysed reaction is tRNA(Leu) + L-leucine + ATP = L-leucyl-tRNA(Leu) + AMP + diphosphate. In Mesorhizobium japonicum (strain LMG 29417 / CECT 9101 / MAFF 303099) (Mesorhizobium loti (strain MAFF 303099)), this protein is Leucine--tRNA ligase.